Reading from the N-terminus, the 465-residue chain is Iron-sulfur cluster assembly SufBD family protein SERP0500 (465 aa).

It belongs to the iron-sulfur cluster assembly SufBD family.

The chain is Iron-sulfur cluster assembly SufBD family protein SERP0500 from Staphylococcus epidermidis (strain ATCC 35984 / DSM 28319 / BCRC 17069 / CCUG 31568 / BM 3577 / RP62A).